We begin with the raw amino-acid sequence, 582 residues long: DNA primase (582 aa).

The CHC2-type zinc finger occupies 40–64; that stretch reads CPFHHEKTPSFTVSQKKQFYHCFGC. The 83-residue stretch at 259–341 folds into the Toprim domain; it reads EMLLVVEGYM…GRQLKFVFLP (83 aa). Positions 265, 309, and 311 each coordinate Mg(2+).

The protein belongs to the DnaG primase family. As to quaternary structure, monomer. Interacts with DnaB. Requires Zn(2+) as cofactor. Mg(2+) is required as a cofactor.

The enzyme catalyses ssDNA + n NTP = ssDNA/pppN(pN)n-1 hybrid + (n-1) diphosphate.. RNA polymerase that catalyzes the synthesis of short RNA molecules used as primers for DNA polymerase during DNA replication. The sequence is that of DNA primase from Pasteurella multocida (strain Pm70).